The following is a 348-amino-acid chain: Type II methyltransferase M.BglI (348 aa).

It belongs to the N(4)/N(6)-methyltransferase family.

The enzyme catalyses a 2'-deoxycytidine in DNA + S-adenosyl-L-methionine = an N(4)-methyl-2'-deoxycytidine in DNA + S-adenosyl-L-homocysteine + H(+). A beta subtype methylase, recognizes the double-stranded sequence 5'-GCCNNNNNGGC-3', methylates C-2 on both strands, and protects the DNA from cleavage by the BglI endonuclease. The protein is Type II methyltransferase M.BglI (bglIM) of Bacillus subtilis.